The following is a 1170-amino-acid chain: Integrin alpha-2 (1170 aa).

Residues 1 to 18 form the signal peptide; it reads PLQLVLVFSQGILNCCVA. The Extracellular segment spans residues 19–1121; sequence YNVGLPKAKI…KPHEKVEVPT (1103 aa). 2 FG-GAP repeats span residues 23 to 81 and 90 to 150; these read LPKA…TTTC and TSMS…LRTS. A disulfide bond links C72 and C81. 3 N-linked (GlcNAc...) asparagine glycosylation sites follow: N94, N101, and N332. Positions 177–354 constitute a VWFA domain; it reads WDAVKNFLEK…TIGEQIFSIE (178 aa). 5 FG-GAP repeats span residues 355-409, 412-464, 466-528, 529-587, and 591-653; these read GTVQ…LIFS, AFEQ…ENGN, TVIQ…ILNW, HQFL…MIRL, and QKIL…FTPK. 3 N-linked (GlcNAc...) asparagine glycosylation sites follow: N421, N449, and N464. A Cell attachment site motif is present at residues 472-474; it reads RGD. The Ca(2+) site is built by D488, N490, D492, D496, D552, N554, D556, D560, D616, N618, D620, and D624. C669 and C726 are oxidised to a cystine. Residues N688 and N748 are each glycosylated (N-linked (GlcNAc...) asparagine). 2 disulfide bridges follow: C778/C784 and C854/C865. N945 is a glycosylation site (N-linked (GlcNAc...) asparagine). Cystine bridges form between C1008-C1039 and C1044-C1049. 2 N-linked (GlcNAc...) asparagine glycosylation sites follow: N1063 and N1070. A helical membrane pass occupies residues 1122-1143; that stretch reads GVIVGSVIAGILLLLALVAILW. Residues 1144–1170 are Cytoplasmic-facing; the sequence is KLGFFKRKYEKMAKNPDETDETTELNS. The short motif at 1146–1150 is the GFFKR motif element; that stretch reads GFFKR.

The protein belongs to the integrin alpha chain family. In terms of assembly, heterodimer of an alpha and a beta subunit. Alpha-2 associates with beta-1. Interacts with HPS5 and RAB21.

The protein localises to the membrane. Its function is as follows. Integrin alpha-2/beta-1 is a receptor for laminin, collagen, collagen C-propeptides, fibronectin and E-cadherin. It recognizes the proline-hydroxylated sequence G-F-P-G-E-R in collagen. It is responsible for adhesion of platelets and other cells to collagens, modulation of collagen and collagenase gene expression, force generation and organization of newly synthesized extracellular matrix. The polypeptide is Integrin alpha-2 (ITGA2) (Bos taurus (Bovine)).